The sequence spans 106 residues: PTS system fructose-like EIIB component 2 (106 aa).

The PTS EIIB type-2 domain maps to 1–103 (MTKIIAVTAC…IMSKIEAHLA (103 aa)). The active-site Phosphocysteine intermediate is the C10. A Phosphocysteine; by EIIA modification is found at C10.

Its subcellular location is the cytoplasm. The catalysed reaction is D-fructose(out) + N(pros)-phospho-L-histidyl-[protein] = D-fructose 1-phosphate(in) + L-histidyl-[protein]. Its function is as follows. The phosphoenolpyruvate-dependent sugar phosphotransferase system (sugar PTS), a major carbohydrate active transport system, catalyzes the phosphorylation of incoming sugar substrates concomitantly with their translocation across the cell membrane. The enzyme II FrwABC PTS system is involved in fructose transport. This chain is PTS system fructose-like EIIB component 2 (frwB), found in Escherichia coli O157:H7.